The sequence spans 459 residues: MEHTKKFKSLNLHGFDRSTEDYGKRPFVLTAKLLEDQKKAIYGCAFNQYAGIDEEQAVATVGGSFLHMYSVPIDINNIELQWSCNFPTDKSSKVEREESLFTVTWCYDTYEAENDRNPFKVVTGGTLGHIYVIDYVSRKLSNRLRSVGWEINDIRTCPANSNLIVCASSDQSIRIHHIRNEACLIVIGGLECHAGTILSVDWSTDGDFILSCGFDHQLMEWDLSVKQVKEHLERACKALHQDKINVLTQSQDIPYVSKGTMRKSAVSRNIPDKEEDQLLELHRELIPRPSCLLPIYTPSSVSTDMHSDYVDCIRFLIGTNYALSKGCGNEKAIHFWRFGPPKGEVENRIHGNVLRPKSCTTKFRTMNVPSGSAWFIKFAVDPRRRWLVCGGAGGSVMFFDLRNNEETNPTHTCSVGSRTVRQASFSTCGRFLVLVTDEGFVCRFDRVSASVDAKDLAKF.

WD repeat units lie at residues 146-186 (SVGW…CLIV), 192-231 (CHAG…VKEH), 305-346 (MHSD…GEVE), 370-409 (SGSA…ETNP), and 415-454 (VGSR…VDAK).

Belongs to the WD repeat ESC family. Interacts directly with the N-terminal domain of mes-2. Forms a heterotrimeric complex with mes-2 and mes-3. Does not interact with mes-4. As to expression, in adults, it is predominantly expressed in the germline, and weakly expressed in intestinal cells.

The protein resides in the nucleus. Its function is as follows. Polycomb group (PcG) protein. PcG proteins act by forming multiprotein complexes, which are required to maintain the transcriptionally repressive state of homeotic genes throughout development. In association with the nfya-1-NF-Y complex, may play a role in repressing the expression of the homeobox protein egl-5 in tissues such as the head. PcG proteins are not required to initiate repression, but to maintain it during later stages of development. The mes-2/mes-3/mes-6 complex may participate in the global inactivation of the X chromosomes in germline cells. The complex may act via methylation of histone H3 'Lys-27', rendering chromatin heritably changed in its expressibility. This complex is required to exclude mes-4 from the inactivated X-chromosomes in germline cells. Required for small-RNA-induced H3K27 trimethylation. The protein is Polycomb protein mes-6 of Caenorhabditis elegans.